The chain runs to 581 residues: MRHCDSFCELIPMKGCEAILEWMIDQGAGREPADIVLKGGRFLDLITGELVESDIAICEDRIVGTFGTYRGKHEIDVSGRIVVPGFIDTHLHIASSQVTPHEFDRCVLPQGVTTAICDPHEIANVLGAEGIRFFLDSALETVMDIRVQLSSCVPATHMETSGAELLIDDLLPFADHPKVIGLAEFMNFPGVLAKDPECMAKLRAFQGRHIDGHAPLLRGLDLNGYIAAGIRTEHEATNAEEALEKLRKGMYVLVREGSVSKDLKALMPIITERHAQFLALCTDDRNPLDIADQGHLDYLIRTAIAGGVEPLAIYRAASVSAARVFGLFDRGLVAPGQRADLVVVDSLEGCHAEIVLSAGRVVSEALFAARKPVAEVGRNSVKAPRVTASNFRSQSNSGKTRAIGIVPGKIITQNLEFDLKVGPNGVEPDLERDVVKVAVIERHGKNGNIATGFVHGFGLKAGAIASTVSHDSHNICVVGASDEDIATAANRLGEIEGGFVVVRDGKVLAEIPLPIAGLMSTEPYETVREALRKLRHAAEDLGSVLEEPFLQLAFIALPVIPHLKITDRGLVDVDKFEFVGN.

It belongs to the metallo-dependent hydrolases superfamily. Adenine deaminase family. Mn(2+) serves as cofactor.

It carries out the reaction adenine + H2O + H(+) = hypoxanthine + NH4(+). In Brucella melitensis biotype 1 (strain ATCC 23456 / CCUG 17765 / NCTC 10094 / 16M), this protein is Adenine deaminase.